The sequence spans 219 residues: Chalcone--flavanone isomerase (219 aa).

Substrate is bound by residues threonine 50, asparagine 115, and serine 192.

This sequence belongs to the chalcone isomerase family.

It catalyses the reaction a chalcone = a flavanone.. Its pathway is secondary metabolite biosynthesis; flavonoid biosynthesis. Its function is as follows. Catalyzes the intramolecular cyclization of bicyclic chalcones into tricyclic (S)-flavanones. Responsible for the isomerization of 4,2',4',6'-tetrahydroxychalcone (also termed chalcone) into naringenin. This chain is Chalcone--flavanone isomerase (CHI), found in Pyrus communis (Pear).